The primary structure comprises 65 residues: Small ribosomal subunit protein bS21A (65 aa).

Belongs to the bacterial ribosomal protein bS21 family.

The protein is Small ribosomal subunit protein bS21A of Francisella tularensis subsp. holarctica (strain LVS).